The chain runs to 965 residues: Isoleucine--tRNA ligase (965 aa).

The 'HIGH' region motif lies at 68-78 (PYANGSLHMGH). E582 contributes to the L-isoleucyl-5'-AMP binding site. A 'KMSKS' region motif is present at residues 623-627 (KMSKS). Residue K626 participates in ATP binding. Positions 936, 939, 956, and 959 each coordinate Zn(2+).

The protein belongs to the class-I aminoacyl-tRNA synthetase family. IleS type 1 subfamily. Monomer. It depends on Zn(2+) as a cofactor.

It is found in the cytoplasm. The catalysed reaction is tRNA(Ile) + L-isoleucine + ATP = L-isoleucyl-tRNA(Ile) + AMP + diphosphate. Functionally, catalyzes the attachment of isoleucine to tRNA(Ile). As IleRS can inadvertently accommodate and process structurally similar amino acids such as valine, to avoid such errors it has two additional distinct tRNA(Ile)-dependent editing activities. One activity is designated as 'pretransfer' editing and involves the hydrolysis of activated Val-AMP. The other activity is designated 'posttransfer' editing and involves deacylation of mischarged Val-tRNA(Ile). This Prochlorococcus marinus subsp. pastoris (strain CCMP1986 / NIES-2087 / MED4) protein is Isoleucine--tRNA ligase.